Here is a 283-residue protein sequence, read N- to C-terminus: Acetylglutamate kinase (283 aa).

Substrate is bound by residues 63-64, Arg-85, and Asn-178; that span reads GG.

Belongs to the acetylglutamate kinase family. ArgB subfamily.

It is found in the cytoplasm. It catalyses the reaction N-acetyl-L-glutamate + ATP = N-acetyl-L-glutamyl 5-phosphate + ADP. It functions in the pathway amino-acid biosynthesis; L-arginine biosynthesis; N(2)-acetyl-L-ornithine from L-glutamate: step 2/4. Catalyzes the ATP-dependent phosphorylation of N-acetyl-L-glutamate. This Prochlorococcus marinus (strain MIT 9301) protein is Acetylglutamate kinase.